A 400-amino-acid chain; its full sequence is MAANYSSTSSRKEHVKVTSEPQPGFLERLSETSGGMFVGLMTFLLSFYLIFTNEGRALKTATSLAEGLSLVVSPDSIHSVAPENEGRLVHIIGALRTSKLLSDPNYGVHLPAVKLRRHVEMYQWVETEESSEYTEDGQVKKETKYSYNTEWRSEIVNSRNFDREIGHKNPSAMAVESFTATAPFVQIGRFFLSAGLIDKIDNFKALSLAKLEDPHVDIIRRGDFFYHSENPKYPEVGDVRVSFSYAGLSSDDPDLGPAHVVTVIARQRGDQLIPYSTKSGDTLLLLHHGDFSAEEVFRREQKSNSMKTWGLRAAGWMAMFMGLNLMTRILYTLVDWFPVFRDLVNIGLKAFAFCVATSLTLLTVAAGWLFYRPLWAALIGCLALVPIIIARTRVPAKKLE.

At alanine 2 the chain carries N-acetylalanine. Residues 2–31 (AANYSSTSSRKEHVKVTSEPQPGFLERLSE) lie on the Nuclear side of the membrane. The chain crosses the membrane as a helical span at residues 32 to 52 (TSGGMFVGLMTFLLSFYLIFT). The Perinuclear space segment spans residues 53-313 (NEGRALKTAT…NSMKTWGLRA (261 aa)). Residues 314-334 (AGWMAMFMGLNLMTRILYTLV) traverse the membrane as a helical segment. Residues 335 to 345 (DWFPVFRDLVN) lie on the Nuclear side of the membrane. A helical transmembrane segment spans residues 346–366 (IGLKAFAFCVATSLTLLTVAA). At 367 to 368 (GW) the chain is on the perinuclear space side. Residues 369-389 (LFYRPLWAALIGCLALVPIII) traverse the membrane as a helical segment. At 390–400 (ARTRVPAKKLE) the chain is on the nuclear side.

The protein belongs to the TMEM43 family. As to quaternary structure, can form oligomers through the transmembrane domains. Interacts with EMD; the interaction retains EMD at the inner nuclear membrane. Interacts with LMNA and LMNB2. Interacts with SUN2. Interacts with RNF26; this interaction is important to modulate innate immune signaling through the cGAS-STING pathway. Interacts with CARD10. Interacts with gap junctions proteins GJB2/Cx26 and GJB4/Cx30. Widely expressed, including in the cochlea, heart, eye, brain and kidney.

The protein localises to the endoplasmic reticulum membrane. It is found in the nucleus inner membrane. The protein resides in the cell membrane. Its function is as follows. May have an important role in maintaining nuclear envelope structure by organizing protein complexes at the inner nuclear membrane. Required for retaining emerin at the inner nuclear membrane. Plays a role in the modulation of innate immune signaling through the cGAS-STING pathway by interacting with RNF26. In addition, functions as a critical signaling component in mediating NF-kappa-B activation by acting downstream of EGFR and upstream of CARD10. Contributes to passive conductance current in cochlear glia-like supporting cells, mediated by gap junctions and necessary for hearing. In Mus musculus (Mouse), this protein is Transmembrane protein 43 (Tmem43).